The chain runs to 113 residues: Cell division protein FtsB (113 aa).

Residues 1–3 (MRL) lie on the Cytoplasmic side of the membrane. Residues 4-21 (ISLLLFVLLLAIQYPLWL) traverse the membrane as a helical segment. Topologically, residues 22-113 (GKGGWLRVWD…PNSVAGRGGH (92 aa)) are periplasmic. Positions 34–64 (RQVNEQTVHNQALKLRNAKLEGEVKDLQDGT) form a coiled coil. Residues 93–113 (KVSATPPLPPPPNSVAGRGGH) are disordered.

It belongs to the FtsB family. In terms of assembly, part of a complex composed of FtsB, FtsL and FtsQ.

It is found in the cell inner membrane. Its function is as follows. Essential cell division protein. May link together the upstream cell division proteins, which are predominantly cytoplasmic, with the downstream cell division proteins, which are predominantly periplasmic. The protein is Cell division protein FtsB of Cupriavidus metallidurans (strain ATCC 43123 / DSM 2839 / NBRC 102507 / CH34) (Ralstonia metallidurans).